The chain runs to 320 residues: Zinc finger protein 330 (320 aa).

The tract at residues 1–23 (MPKKKTGARKKAENRREREKQLR) is disordered. The Nuclear localization signal signature appears at 3–11 (KKKTGARKK). The span at 10 to 22 (KKAENRREREKQL) shows a compositional bias: basic and acidic residues. 4 consecutive C4-type zinc fingers follow at residues 42–58 (CDKC…CYFC), 67–104 (CAQC…CDFC), 129–149 (CVEC…CSFC), and 175–189 (CVSC…CLRC). 2 disordered regions span residues 206–250 (EKGK…ASGY) and 264–303 (GASY…TNLN). Basic and acidic residues predominate over residues 216 to 225 (CGHETQETKD). Positions 269-287 (DEEEDEYEAEDDEEEEDEG) are enriched in acidic residues. Ser-291 carries the post-translational modification Phosphoserine.

Belongs to the NOA36 family.

The protein resides in the nucleus. It localises to the nucleolus. The protein localises to the chromosome. Its subcellular location is the centromere. The protein is Zinc finger protein 330 (ZNF330) of Bos taurus (Bovine).